The following is a 425-amino-acid chain: Receptor-like protein 55 (425 aa).

The signal sequence occupies residues Met1–Ser25. Over Tyr26–Thr397 the chain is Extracellular. Asn40, Asn54, Asn79, and Asn132 each carry an N-linked (GlcNAc...) asparagine glycan. LRR repeat units follow at residues Leu144–Asn169, Met170–Ser193, Leu195–Leu216, Lys217–Leu240, Phe242–Ile264, Ser265–Glu287, and Met288–Lys313. N-linked (GlcNAc...) asparagine glycosylation is found at Asn182, Asn202, Asn223, Asn245, Asn278, Asn308, and Asn329. A disordered region spans residues Pro355–Glu389. Basic and acidic residues predominate over residues Asn374 to Glu389. N-linked (GlcNAc...) asparagine glycosylation is present at Asn395. Residues Leu398 to Leu418 form a helical membrane-spanning segment. Topologically, residues Ala419–Ile425 are cytoplasmic.

This sequence belongs to the RLP family.

The protein resides in the cell membrane. Functionally, involved in plant defense. The chain is Receptor-like protein 55 from Arabidopsis thaliana (Mouse-ear cress).